Here is a 418-residue protein sequence, read N- to C-terminus: Cobalt-zinc-cadmium resistance protein CzcC (418 aa).

The signal sequence occupies residues 1–22; sequence MRRLFLPLGLAVAFLSPNFAVA.

The protein belongs to the outer membrane factor (OMF) (TC 1.B.17) family.

Its subcellular location is the cell outer membrane. Its function is as follows. CzcC protein appears to modify the specificity of the system, perhaps by acting on the CzcB protein. When the CzcC protein is added to CzcA and CzcB, the efflux system gains specificity for cadmium and cobalt. In Cupriavidus metallidurans (strain ATCC 43123 / DSM 2839 / NBRC 102507 / CH34) (Ralstonia metallidurans), this protein is Cobalt-zinc-cadmium resistance protein CzcC (czcC).